The following is a 305-amino-acid chain: tRNA pseudouridine synthase B (305 aa).

D39 serves as the catalytic Nucleophile.

Belongs to the pseudouridine synthase TruB family. Type 1 subfamily.

The enzyme catalyses uridine(55) in tRNA = pseudouridine(55) in tRNA. In terms of biological role, responsible for synthesis of pseudouridine from uracil-55 in the psi GC loop of transfer RNAs. The chain is tRNA pseudouridine synthase B from Staphylococcus aureus (strain Mu50 / ATCC 700699).